Here is a 145-residue protein sequence, read N- to C-terminus: Large ribosomal subunit protein bL17 (145 aa).

Belongs to the bacterial ribosomal protein bL17 family. In terms of assembly, part of the 50S ribosomal subunit. Contacts protein L32.

This chain is Large ribosomal subunit protein bL17, found in Francisella tularensis subsp. holarctica (strain FTNF002-00 / FTA).